The sequence spans 358 residues: Mesaconyl-CoA hydratase (358 aa).

The MaoC-like domain occupies 44–148 (AHDPGLRLTH…TSSSRPQYGI (105 aa)).

It belongs to the enoyl-CoA hydratase/isomerase family.

The enzyme catalyses (2R,3S)-beta-methylmalyl-CoA = 2-methylfumaryl-CoA + H2O. In terms of biological role, involved in the methylaspartate cycle. Catalyzes the reversible hydration of mesaconyl-CoA (2-methylfumaryl-CoA) to yield beta-methylmalyl-CoA ((2R,3S)-beta-methylmalyl-CoA). The chain is Mesaconyl-CoA hydratase from Haloarcula marismortui (strain ATCC 43049 / DSM 3752 / JCM 8966 / VKM B-1809) (Halobacterium marismortui).